Consider the following 446-residue polypeptide: Phosphoglucosamine mutase (446 aa).

The Phosphoserine intermediate role is filled by serine 99. Residues serine 99, aspartate 242, aspartate 244, and aspartate 246 each contribute to the Mg(2+) site. Phosphoserine is present on serine 99.

Belongs to the phosphohexose mutase family. Mg(2+) serves as cofactor. Post-translationally, activated by phosphorylation.

The enzyme catalyses alpha-D-glucosamine 1-phosphate = D-glucosamine 6-phosphate. Its function is as follows. Catalyzes the conversion of glucosamine-6-phosphate to glucosamine-1-phosphate. The chain is Phosphoglucosamine mutase from Campylobacter hominis (strain ATCC BAA-381 / DSM 21671 / CCUG 45161 / LMG 19568 / NCTC 13146 / CH001A).